The chain runs to 680 residues: DNA-directed RNA polymerase subunit beta' (680 aa).

Zn(2+)-binding residues include Cys-69, Cys-71, Cys-87, and Cys-90. Mg(2+) is bound by residues Asp-489, Asp-491, and Asp-493.

This sequence belongs to the RNA polymerase beta' chain family. RpoC1 subfamily. As to quaternary structure, in plastids the minimal PEP RNA polymerase catalytic core is composed of four subunits: alpha, beta, beta', and beta''. When a (nuclear-encoded) sigma factor is associated with the core the holoenzyme is formed, which can initiate transcription. The cofactor is Mg(2+). It depends on Zn(2+) as a cofactor.

The protein localises to the plastid. It is found in the chloroplast. It catalyses the reaction RNA(n) + a ribonucleoside 5'-triphosphate = RNA(n+1) + diphosphate. DNA-dependent RNA polymerase catalyzes the transcription of DNA into RNA using the four ribonucleoside triphosphates as substrates. The protein is DNA-directed RNA polymerase subunit beta' of Nasturtium officinale (Watercress).